We begin with the raw amino-acid sequence, 426 residues long: MKHLTEMVRQHKAGKTNGIYAVCSAHPLVLEAAIRYASANQTPLLIEATSNQVDQFGGYTGMTPADFRGFVCQLADSLNFPQDALILGGDHLGPNRWQNLPAAQAMANADDLIKSYVAAGFKKIHLDCSMSCQDDPIPLTDDIVAERAARLAKVAEETCREHFGEADLEYVIGTEVPVPGGAHETLSELAVTTPDAARATLEAHRHAFEKQGLNAIWPRIIALVVQPGVEFDHTNVIDYQPAKASALSQMVENYETLIFEAHSTDYQTPQSLRQLVIDHFAILKVGPALTFSLREALFSLAAIEEELVPAKACSGLRQVLEDVMLDRPEYWQSHYHGDGNARRLARGYSYSDRVRYYWPDSQIDDAFAHLVRNLADSPIPLPLISQYLPLQYVKVRSGELQPTPRELIINHIQDILAQYHTACEGQ.

Belongs to the GatZ/KbaZ family. KbaZ subfamily. As to quaternary structure, forms a complex with KbaY.

The protein operates within carbohydrate metabolism; D-tagatose 6-phosphate degradation; D-glyceraldehyde 3-phosphate and glycerone phosphate from D-tagatose 6-phosphate: step 2/2. Functionally, component of the tagatose-1,6-bisphosphate aldolase KbaYZ that is required for full activity and stability of the Y subunit. Could have a chaperone-like function for the proper and stable folding of KbaY. When expressed alone, KbaZ does not show any aldolase activity. This chain is D-tagatose-1,6-bisphosphate aldolase subunit KbaZ, found in Escherichia coli O8 (strain IAI1).